A 256-amino-acid chain; its full sequence is Deoxyribose-phosphate aldolase (256 aa).

The active-site Proton donor/acceptor is the Asp-102. Catalysis depends on Lys-165, which acts as the Schiff-base intermediate with acetaldehyde. Lys-197 serves as the catalytic Proton donor/acceptor.

This sequence belongs to the DeoC/FbaB aldolase family. DeoC type 2 subfamily.

The protein localises to the cytoplasm. It catalyses the reaction 2-deoxy-D-ribose 5-phosphate = D-glyceraldehyde 3-phosphate + acetaldehyde. It functions in the pathway carbohydrate degradation; 2-deoxy-D-ribose 1-phosphate degradation; D-glyceraldehyde 3-phosphate and acetaldehyde from 2-deoxy-alpha-D-ribose 1-phosphate: step 2/2. In terms of biological role, catalyzes a reversible aldol reaction between acetaldehyde and D-glyceraldehyde 3-phosphate to generate 2-deoxy-D-ribose 5-phosphate. The protein is Deoxyribose-phosphate aldolase of Shewanella oneidensis (strain ATCC 700550 / JCM 31522 / CIP 106686 / LMG 19005 / NCIMB 14063 / MR-1).